A 150-amino-acid chain; its full sequence is Transcriptional regulator MraZ (150 aa).

SpoVT-AbrB domains are found at residues 7–58 and 87–130; these read KEQH…EPEI and LDSV…SPEK.

This sequence belongs to the MraZ family. As to quaternary structure, forms oligomers.

The protein resides in the cytoplasm. Its subcellular location is the nucleoid. The protein is Transcriptional regulator MraZ of Chlorobium phaeobacteroides (strain BS1).